The primary structure comprises 256 residues: Thiazole synthase (256 aa).

The active-site Schiff-base intermediate with DXP is Lys-96. 1-deoxy-D-xylulose 5-phosphate contacts are provided by residues Gly-157, 184–185 (AG), and 206–207 (NT).

The protein belongs to the ThiG family. As to quaternary structure, homotetramer. Forms heterodimers with either ThiH or ThiS.

The protein resides in the cytoplasm. It catalyses the reaction [ThiS sulfur-carrier protein]-C-terminal-Gly-aminoethanethioate + 2-iminoacetate + 1-deoxy-D-xylulose 5-phosphate = [ThiS sulfur-carrier protein]-C-terminal Gly-Gly + 2-[(2R,5Z)-2-carboxy-4-methylthiazol-5(2H)-ylidene]ethyl phosphate + 2 H2O + H(+). Its pathway is cofactor biosynthesis; thiamine diphosphate biosynthesis. Functionally, catalyzes the rearrangement of 1-deoxy-D-xylulose 5-phosphate (DXP) to produce the thiazole phosphate moiety of thiamine. Sulfur is provided by the thiocarboxylate moiety of the carrier protein ThiS. In vitro, sulfur can be provided by H(2)S. The sequence is that of Thiazole synthase from Brucella canis (strain ATCC 23365 / NCTC 10854 / RM-666).